The primary structure comprises 349 residues: Cobalt-precorrin-5B C(1)-methyltransferase (349 aa).

The protein belongs to the CbiD family.

The enzyme catalyses Co-precorrin-5B + S-adenosyl-L-methionine = Co-precorrin-6A + S-adenosyl-L-homocysteine. It functions in the pathway cofactor biosynthesis; adenosylcobalamin biosynthesis; cob(II)yrinate a,c-diamide from sirohydrochlorin (anaerobic route): step 6/10. In terms of biological role, catalyzes the methylation of C-1 in cobalt-precorrin-5B to form cobalt-precorrin-6A. In Saccharolobus islandicus (strain M.16.27) (Sulfolobus islandicus), this protein is Cobalt-precorrin-5B C(1)-methyltransferase.